The sequence spans 1060 residues: DNA topoisomerase 1 (1060 aa).

In terms of domain architecture, Toprim spans 1–141; it reads MILVIAEKPN…KRMKFSALTK (141 aa). The Mg(2+) site is built by Glu7 and Asp107. The Topo IA-type catalytic domain maps to 156–947; sequence NFGMANAGIA…EAKIRLTKIL (792 aa). The interaction with DNA stretch occupies residues 196–201; sequence STGRVQ. Residues 482 to 591 form the DOD-type homing endonuclease domain; sequence LIGYLAGKGG…IKVYLQLLGI (110 aa). Residue Tyr690 is the O-(5'-phospho-DNA)-tyrosine intermediate of the active site. The C4-type 1 zinc-finger motif lies at 978–1006; the sequence is CPKCGGDLIVKYNEKTGKRFVGCSNWPKC. The segment at 1025–1050 adopts a C4-type 2; atypical zinc-finger fold; that stretch reads CCNGAPVVIIREKDGREWEICLDMNC.

Belongs to the type IA topoisomerase family. As to quaternary structure, monomer. Requires Mg(2+) as cofactor. In terms of processing, this protein undergoes a protein self splicing that involves a post-translational excision of the intervening region (intein) followed by peptide ligation.

It catalyses the reaction ATP-independent breakage of single-stranded DNA, followed by passage and rejoining.. Functionally, releases the supercoiling and torsional tension of DNA, which is introduced during the DNA replication and transcription, by transiently cleaving and rejoining one strand of the DNA duplex. Introduces a single-strand break via transesterification at a target site in duplex DNA. The scissile phosphodiester is attacked by the catalytic tyrosine of the enzyme, resulting in the formation of a DNA-(5'-phosphotyrosyl)-enzyme intermediate and the expulsion of a 3'-OH DNA strand. The free DNA strand then undergoes passage around the unbroken strand, thus removing DNA supercoils. Finally, in the religation step, the DNA 3'-OH attacks the covalent intermediate to expel the active-site tyrosine and restore the DNA phosphodiester backbone. This is DNA topoisomerase 1 (topA) from Pyrococcus furiosus (strain ATCC 43587 / DSM 3638 / JCM 8422 / Vc1).